We begin with the raw amino-acid sequence, 783 residues long: Polyribonucleotide nucleotidyltransferase 1, mitochondrial (783 aa).

A mitochondrion-targeting transit peptide spans 1–46 (MAACRYCCSCLRLRPLSDGPFCLPGRDRALTQLLVRALWSSTGSRA). 4 positions are modified to N6-acetyllysine: lysine 250, lysine 264, lysine 285, and lysine 289. Lysine 552 carries the post-translational modification N6-succinyllysine. The KH domain maps to 605–664 (PVVETVQVPLSKRAKFVGPGGYNLKKLQAETGVTISQVDEETFSVFAPTPSALHEARDFI). The 72-residue stretch at 679-750 (GAVYTATITE…ADGRMRLSRK (72 aa)) folds into the S1 motif domain. Serine 754 and serine 782 each carry phosphoserine.

It belongs to the polyribonucleotide nucleotidyltransferase family. Homotrimer; in free form. Homooligomer. Component of the mitochondrial degradosome (mtEXO) complex which is a heteropentamer containing 2 copies of SUPV3L1 and 3 copies of PNPT1. As part of the mitochondrial degradosome complex, interacts with GRSF1 in an RNA-dependent manner; the interaction enhances the activity of the complex. Interacts with TCL1A; the interaction has no effect on PNPT1 exonuclease activity.

It localises to the cytoplasm. It is found in the mitochondrion matrix. The protein localises to the mitochondrion intermembrane space. It catalyses the reaction RNA(n+1) + phosphate = RNA(n) + a ribonucleoside 5'-diphosphate. RNA-binding protein implicated in numerous RNA metabolic processes. Catalyzes the phosphorolysis of single-stranded polyribonucleotides processively in the 3'-to-5' direction. Mitochondrial intermembrane factor with RNA-processing exoribonulease activity. Component of the mitochondrial degradosome (mtEXO) complex, that degrades 3' overhang double-stranded RNA with a 3'-to-5' directionality in an ATP-dependent manner. Involved in the degradation of non-coding mitochondrial transcripts (MT-ncRNA) and tRNA-like molecules. Required for correct processing and polyadenylation of mitochondrial mRNAs. Plays a role as a cytoplasmic RNA import factor that mediates the translocation of small RNA components like the 5S RNA, the RNA subunit of ribonuclease P and the mitochondrial RNA-processing (MRP) RNA, into the mitochondrial matrix. Plays a role in mitochondrial morphogenesis and respiration; regulates the expression of the electron transport chain (ETC) components at the mRNA and protein levels. In the cytoplasm, shows a 3'-to-5' exoribonuclease mediating mRNA degradation activity; degrades c-myc mRNA upon treatment with IFNB1/IFN-beta, resulting in a growth arrest in melanoma cells. Regulates the stability of specific mature miRNAs in melanoma cells; specifically and selectively degrades miR-221, preferentially. Also plays a role in RNA cell surveillance by cleaning up oxidized RNAs. Binds to the RNA subunit of ribonuclease P, MRP RNA and miR-221 microRNA. The polypeptide is Polyribonucleotide nucleotidyltransferase 1, mitochondrial (PNPT1) (Pongo abelii (Sumatran orangutan)).